An 89-amino-acid polypeptide reads, in one-letter code: Small ribosomal subunit protein uS15 (89 aa).

The protein belongs to the universal ribosomal protein uS15 family. In terms of assembly, part of the 30S ribosomal subunit. Forms a bridge to the 50S subunit in the 70S ribosome, contacting the 23S rRNA.

Functionally, one of the primary rRNA binding proteins, it binds directly to 16S rRNA where it helps nucleate assembly of the platform of the 30S subunit by binding and bridging several RNA helices of the 16S rRNA. Its function is as follows. Forms an intersubunit bridge (bridge B4) with the 23S rRNA of the 50S subunit in the ribosome. The protein is Small ribosomal subunit protein uS15 of Chlorobium phaeovibrioides (strain DSM 265 / 1930) (Prosthecochloris vibrioformis (strain DSM 265)).